Reading from the N-terminus, the 477-residue chain is GTPase Der (477 aa).

EngA-type G domains are found at residues 3-167 (LTIA…GKER) and 206-382 (LRIA…RMWN). Residues 9–16 (GRPNVGKS), 56–60 (DTAGL), 119–122 (NKSE), 212–219 (GRPNTGKS), 259–263 (DTAGL), and 324–327 (NKWD) each bind GTP. Residues 383 to 467 (RRISTAKLNR…PIRISLRASD (85 aa)) enclose the KH-like domain.

This sequence belongs to the TRAFAC class TrmE-Era-EngA-EngB-Septin-like GTPase superfamily. EngA (Der) GTPase family. Associates with the 50S ribosomal subunit.

In terms of biological role, GTPase that plays an essential role in the late steps of ribosome biogenesis. The chain is GTPase Der from Bartonella quintana (strain Toulouse) (Rochalimaea quintana).